We begin with the raw amino-acid sequence, 956 residues long: Netrin receptor UNC5D (956 aa).

The signal sequence occupies residues 1-30; it reads MGTGAADGSRGARRWLPWLGLFFWAAGAAA. At 31-382 the chain is on the extracellular side; that stretch reads ARGADGSEIL…SRRGIENASD (352 aa). The region spanning 52–149 is the Ig-like domain; it reads PHFIEEPEDA…LGTSKSRKAS (98 aa). 9 cysteine pairs are disulfide-bonded: Cys-73/Cys-134, Cys-85/Cys-132, Cys-178/Cys-229, Cys-262/Cys-299, Cys-266/Cys-303, Cys-277/Cys-289, Cys-318/Cys-352, Cys-322/Cys-357, and Cys-330/Cys-342. Residues 89 to 91 are important for interaction with FLRT2; sequence WVH. 2 N-linked (GlcNAc...) asparagine glycosylation sites follow: Asn-115 and Asn-226. In terms of domain architecture, Ig-like C2-type spans 151 to 242; that stretch reads RIAYLRKNFE…NIVAKRRSLS (92 aa). TSP type-1 domains are found at residues 250-304 and 306-358; these read NGGW…ALCP and DGSW…GLCI. Asn-351 and Asn-379 each carry an N-linked (GlcNAc...) asparagine glycan. A helical transmembrane segment spans residues 383–403; it reads IALYSGLGAAVVAVAVLVIGV. Topologically, residues 404 to 956 are cytoplasmic; the sequence is TLYRRSHSDY…DFNYSRQNGL (553 aa). One can recognise a ZU5 domain in the interval 545 to 685; it reads LRTTGVFGHL…FGTYALTGEP (141 aa). The 78-residue stretch at 862–939 folds into the Death domain; it reads QRICATFDTP…RTHTKLSNIT (78 aa).

Belongs to the unc-5 family. Interacts (via extracellular domain) with FLRT2 and FLRT3 (via extracellular domain); the interaction is direct. Has higher affinity for FLRT2. Identified in a complex with FLRT3 and ADGRL3; does not interact with ADGRL3 by itself. In terms of processing, proteolytically cleaved by caspases during apoptosis. The cleavage does not take place when the receptor is associated with netrin ligand. Its cleavage by caspases is required to induce apoptosis. In terms of tissue distribution, detected in multipolar cells in the brain subventricular zone (at protein level). Detected in embryonic brain neocortex, especially in the subventricular zone. Detected in multipolar cells in the brain subventricular zone. Detected in brain neocortex from young pups, especially in the somatosensory cortex. Expressed in developing limb and mammary gland.

It is found in the cell membrane. Its function is as follows. Receptor for the netrin NTN4 that promotes neuronal cell survival. Plays a role in cell-cell adhesion and cell guidance. Receptor for netrin involved in cell migration. Plays a role in the regulation of neuronal cell migration in the developing brain via its interaction with FLRT2. Plays a role in axon guidance by mediating axon repulsion of neuronal growth cones in the developing nervous system upon ligand binding. May play a role in apoptosis in response to DNA damage. It also acts as a dependence receptor required for apoptosis induction when not associated with netrin ligand. Mediates cell-cell adhesion via its interaction with FLRT3 on an adjacent cell. The sequence is that of Netrin receptor UNC5D (Unc5d) from Mus musculus (Mouse).